A 223-amino-acid polypeptide reads, in one-letter code: Translation initiation factor 6 (223 aa).

The protein belongs to the eIF-6 family.

Functionally, binds to the 50S ribosomal subunit and prevents its association with the 30S ribosomal subunit to form the 70S initiation complex. In Sulfurisphaera tokodaii (strain DSM 16993 / JCM 10545 / NBRC 100140 / 7) (Sulfolobus tokodaii), this protein is Translation initiation factor 6.